The chain runs to 117 residues: Snaclec CHH-B subunit beta (117 aa).

3 disulfide bridges follow: Cys2–Cys13, Cys30–Cys115, and Cys92–Cys107. Residues Tyr9–Lys116 enclose the C-type lectin domain.

Belongs to the snaclec family. Heterodimer of subunits alpha and beta; disulfide-linked. In terms of tissue distribution, expressed by the venom gland.

It is found in the secreted. Its function is as follows. Binds to the subunit GPIbalpha (GP1BA) of the platelet GPIb/V/IX receptor system. It inhibits ristocetin- and vWF-induced platelet aggregation in platelet-rich plasma by inhibiting the binding of vWF to GPIbalpha. This Crotalus horridus (Timber rattlesnake) protein is Snaclec CHH-B subunit beta.